The sequence spans 248 residues: uncharacterized protein (248 aa).

S141 contributes to the substrate binding site. Y154 acts as the Proton acceptor in catalysis.

It belongs to the short-chain dehydrogenases/reductases (SDR) family.

This is an uncharacterized protein from Methylorubrum extorquens (strain ATCC 14718 / DSM 1338 / JCM 2805 / NCIMB 9133 / AM1) (Methylobacterium extorquens).